Consider the following 571-residue polypeptide: Sulfite reductase [NADPH] hemoprotein beta-component (571 aa).

Residues C435, C441, C480, and C484 each coordinate [4Fe-4S] cluster. C484 is a siroheme binding site.

This sequence belongs to the nitrite and sulfite reductase 4Fe-4S domain family. Alpha(8)-beta(8). The alpha component is a flavoprotein, the beta component is a hemoprotein. Requires siroheme as cofactor. [4Fe-4S] cluster is required as a cofactor.

It catalyses the reaction hydrogen sulfide + 3 NADP(+) + 3 H2O = sulfite + 3 NADPH + 4 H(+). Its pathway is sulfur metabolism; hydrogen sulfide biosynthesis; hydrogen sulfide from sulfite (NADPH route): step 1/1. Functionally, component of the sulfite reductase complex that catalyzes the 6-electron reduction of sulfite to sulfide. This is one of several activities required for the biosynthesis of L-cysteine from sulfate. The protein is Sulfite reductase [NADPH] hemoprotein beta-component of Musicola paradisiaca (strain Ech703) (Dickeya paradisiaca).